The sequence spans 439 residues: Lipid-A-disaccharide synthase (439 aa).

It belongs to the LpxB family.

The catalysed reaction is a lipid X + a UDP-2-N,3-O-bis[(3R)-3-hydroxyacyl]-alpha-D-glucosamine = a lipid A disaccharide + UDP + H(+). The protein operates within bacterial outer membrane biogenesis; LPS lipid A biosynthesis. Its function is as follows. Condensation of UDP-2,3-diacylglucosamine and 2,3-diacylglucosamine-1-phosphate to form lipid A disaccharide, a precursor of lipid A, a phosphorylated glycolipid that anchors the lipopolysaccharide to the outer membrane of the cell. The protein is Lipid-A-disaccharide synthase of Xanthomonas axonopodis pv. citri (strain 306).